The following is a 189-amino-acid chain: MTLAAYKEKMKELPLVSLFCSCFLADPLNKSSYKYEADTVDLNWCVISDMEVIELNKCTSGQSFEVILKPPSFDGVPEFNASLPRRRDPSLEEIQKKLEAAEERRKYQEAELLKHLAEKREHEREVIQKAIEENNNFIKMAKEKLAQKMESNKENREAHLAAMLERLQEKDKHAEEVRKNKELKEEASR.

S-palmitoyl cysteine attachment occurs at residues C20 and C22. Positions 48–189 constitute an SLD domain; it reads SDMEVIELNK…NKELKEEASR (142 aa). S90 carries the phosphoserine modification. The stretch at 90–188 forms a coiled coil; that stretch reads SLEEIQKKLE…KNKELKEEAS (99 aa). Residues 168–189 form a disordered region; that stretch reads QEKDKHAEEVRKNKELKEEASR.

The protein belongs to the stathmin family.

The protein resides in the golgi apparatus. It is found in the cell projection. Its subcellular location is the growth cone. It localises to the axon. Exhibits microtubule-destabilizing activity. The chain is Stathmin-4 (STMN4) from Homo sapiens (Human).